Reading from the N-terminus, the 197-residue chain is Probable GTP-binding protein EngB (197 aa).

The EngB-type G domain maps to Gly22–Gly195. GTP contacts are provided by residues Gly30–Ser37, Gly57–Thr61, Asp75–Gly78, Thr142–Asp145, and Phe174–Ala176. Ser37 and Thr59 together coordinate Mg(2+).

The protein belongs to the TRAFAC class TrmE-Era-EngA-EngB-Septin-like GTPase superfamily. EngB GTPase family. Requires Mg(2+) as cofactor.

In terms of biological role, necessary for normal cell division and for the maintenance of normal septation. The polypeptide is Probable GTP-binding protein EngB (Lactiplantibacillus plantarum (strain ATCC BAA-793 / NCIMB 8826 / WCFS1) (Lactobacillus plantarum)).